A 195-amino-acid polypeptide reads, in one-letter code: uncharacterized protein (195 aa).

The HD domain maps to 24 to 141 (NTDENLKLIF…VFLADKISWD (118 aa)).

This is an uncharacterized protein from Lactococcus lactis subsp. cremoris (Streptococcus cremoris).